A 119-amino-acid chain; its full sequence is Small ribosomal subunit protein uS13 (119 aa).

Basic residues predominate over residues 94–113; it reads GLPVRGQRTKTNARTRKGPR. The tract at residues 94 to 119 is disordered; sequence GLPVRGQRTKTNARTRKGPRKAIGAK.

Belongs to the universal ribosomal protein uS13 family. Part of the 30S ribosomal subunit. Forms a loose heterodimer with protein S19. Forms two bridges to the 50S subunit in the 70S ribosome.

Functionally, located at the top of the head of the 30S subunit, it contacts several helices of the 16S rRNA. In the 70S ribosome it contacts the 23S rRNA (bridge B1a) and protein L5 of the 50S subunit (bridge B1b), connecting the 2 subunits; these bridges are implicated in subunit movement. Contacts the tRNAs in the A and P-sites. The polypeptide is Small ribosomal subunit protein uS13 (Nitrosomonas europaea (strain ATCC 19718 / CIP 103999 / KCTC 2705 / NBRC 14298)).